A 281-amino-acid polypeptide reads, in one-letter code: Transcription factor HES-1 (281 aa).

The interval 1-44 (MPADIMEKNSSSPVAATPASVNTTPDKPKTASEHRKSSKPIMEK) is disordered. Over residues 10-21 (SSSPVAATPASV) the composition is skewed to low complexity. Residues 26–35 (DKPKTASEHR) are compositionally biased toward basic and acidic residues. The region spanning 34-91 (HRKSSKPIMEKRRRARINESLSQLKTLILDALKKDSSRHSKLEKADILEMTVKHLRNL) is the bHLH domain. An Orange domain is found at 110-143 (YRAGFSECMNEVTRFLSTCEGVNTEVRTRLLGHL). Disordered regions lie at residues 158–206 (QAHP…PCKL) and 255–281 (TSVG…PWRN). Composition is skewed to pro residues over residues 164–174 (QAPPPPPPSGP) and 182–201 (FAPP…PPGS). Polar residues predominate over residues 255 to 272 (TSVGPNAVSPSSGSSLTA). Residues 276 to 279 (WRPW) carry the WRPW motif motif.

In terms of assembly, interacts with SIRT1. Interacts weakly with TLE2. Interacts with HES6. Transcription repression requires formation of a complex with a corepressor protein of the Groucho/TLE family. Interacts (via WPRW motif) with TLE1. Interacts with an FA complex, composed of FANCA, FANCF, FANCG and FANCL, but not of FANCC, nor FANCE. In terms of tissue distribution, present in all tissues examined but highest in epithelial cells and in mesoderm-derived tissues such as embryonal muscle cells.

Its subcellular location is the nucleus. In terms of biological role, transcriptional repressor of genes that require a bHLH protein for their transcription. May act as a negative regulator of myogenesis by inhibiting the functions of MYOD1 and ASH1. Binds DNA on N-box motifs: 5'-CACNAG-3' with high affinity and on E-box motifs: 5'-CANNTG-3' with low affinity. May play a role in a functional FA core complex response to DNA cross-link damage, being required for the stability and nuclear localization of FA core complex proteins, as well as for FANCD2 monoubiquitination in response to DNA damage. The sequence is that of Transcription factor HES-1 (Hes1) from Rattus norvegicus (Rat).